The following is a 146-amino-acid chain: Anti-sigma F factor (146 aa).

The protein belongs to the anti-sigma-factor family.

It carries out the reaction L-seryl-[protein] + ATP = O-phospho-L-seryl-[protein] + ADP + H(+). The catalysed reaction is L-threonyl-[protein] + ATP = O-phospho-L-threonyl-[protein] + ADP + H(+). Its function is as follows. Binds to sigma F and blocks its ability to form an RNA polymerase holoenzyme (E-sigma F). Phosphorylates SpoIIAA on a serine residue. This phosphorylation may enable SpoIIAA to act as an anti-anti-sigma factor that counteracts SpoIIAB and thus releases sigma F from inhibition. The chain is Anti-sigma F factor from Bacillus cereus (strain G9842).